Consider the following 552-residue polypeptide: Putative transport protein APL_0966 (552 aa).

Transmembrane regions (helical) follow at residues 4–24 (IAIIVSLLSLVAVLGLWIGHI), 29–49 (VGLGIGGVLFGGIIISHCTHL), 65–85 (FGLILFVYSIGIQVGPGFFAS), 95–115 (GFAVMIVGLSGILVALIHKLF), and 161–181 (IAYPFGIIGILLSMWLIRIIF). RCK C-terminal domains are found at residues 190–275 (QEFD…ILGE) and 277–360 (ADVS…IIGD). 6 helical membrane-spanning segments follow: residues 370 to 390 (MLPIFVGIGLGVLLGSLPLYI), 402 to 424 (AGGPLVVALILARIGSIGKLYWF), 438 to 458 (IVLFLSVVGLKAGANFLDTLL), 463 to 483 (LAWMGYGAIITFIPLIVTGFV), 492 to 512 (YLSLCGLLSGAMTDPPALAFA), and 529 to 549 (VYPLVMFLRIILPQLLAILLW).

This sequence belongs to the AAE transporter (TC 2.A.81) family. YidE subfamily.

The protein localises to the cell membrane. The polypeptide is Putative transport protein APL_0966 (Actinobacillus pleuropneumoniae serotype 5b (strain L20)).